Here is a 299-residue protein sequence, read N- to C-terminus: 4-sulfomuconolactone hydrolase (299 aa).

It belongs to the metallo-dependent hydrolases superfamily. Sulfomuconolactone hydrolase family. In terms of assembly, monomer. It depends on Zn(2+) as a cofactor.

The catalysed reaction is 4-sulfomuconolactone + H2O = maleylacetate + sulfite + 2 H(+). Its function is as follows. Involved in the degradation of 4-sulfocatechol which is a central intermediate in the degradation of substituted sulfonated benzenes. Catalyzes the hydrolytical desulfonation of 4-sulfomuconolactone to yield maleylacetate. In Rhizobium radiobacter (Agrobacterium tumefaciens), this protein is 4-sulfomuconolactone hydrolase.